A 547-amino-acid polypeptide reads, in one-letter code: GID complex substrate-recognition subunit 10 (547 aa).

2 stretches are compositionally biased toward polar residues: residues 1 to 11 (MPRSLDNFQNE) and 28 to 41 (GFPN…SNSQ). Disordered regions lie at residues 1 to 42 (MPRS…NSQR), 60 to 115 (EQDS…SNAT), 169 to 217 (RNSS…NPQS), and 285 to 313 (PAVL…QTPN). Over residues 99–108 (SASRQRRRSG) the composition is skewed to basic residues. A compositionally biased stretch (polar residues) spans 169-185 (RNSSTFGSNPNSVFSAQ). 3 stretches are compositionally biased toward low complexity: residues 186–199 (PTEP…SSFP), 207–217 (SRSISISNPQS), and 298–307 (SSSSASSYGS).

Belongs to the GID4/VID24 family. Substrate-recognition component of the GID/CTLH complex. In the absence of stress, the complex exists as an inactive anticipatory complex (GID(Ant)), composed of Gid1, the E3 ubiquitin-ligase Gid2, Gid5, Gid8, and the RING-like subunit Gid9, awaiting a substrate receptor to form the active E3 ligase complex. When cells are shifted to glucose-containing medium, the substrate receptor Gid4 is induced and becomes part of the complex, named GID(SR4). Additionally, Gid7 transforms the GID(SR4) E3 ligase core into a higher-order supramolecular assembly (Chelator-GID(SR4)). Under osmotic or heat stress, the substrate receptor Gid10 is induced and becomes part of the complex, named GID(SR10). Interacts with proteins that have an N-terminal Pro/N-degron.

It is found in the nucleus. Substrate-recognition component of the GID E3 ligase complex recruiting N termini and catalyzing ubiquitination of proteins targeted for degradation. GID E3 is regulated through assembly with interchangeable N-degron-binding substrate receptors induced by distinct environmental perturbations. Required for the adaptation to osmotic or heat stress. Specific for substrates with an N-terminal Pro (Pro/N-degron). This is GID complex substrate-recognition subunit 10 (gid10) from Schizosaccharomyces pombe (strain 972 / ATCC 24843) (Fission yeast).